The sequence spans 257 residues: NAD-capped RNA hydrolase NudC (257 aa).

Positions 25 and 69 each coordinate substrate. Residues Cys98 and Cys101 each contribute to the Zn(2+) site. Substrate is bound at residue Glu111. Positions 116 and 119 each coordinate Zn(2+). Tyr124 is a binding site for substrate. In terms of domain architecture, Nudix hydrolase spans 125–248; the sequence is PQIAPCIIVA…TVARRLIEDT (124 aa). Ala158, Glu174, and Glu178 together coordinate a divalent metal cation. Positions 159 to 180 match the Nudix box motif; the sequence is GFVEVGETLEQAVAREVMEESG. 192–199 is a binding site for substrate; the sequence is QPWPFPQS. Position 219 (Glu219) interacts with a divalent metal cation. A substrate-binding site is contributed by Ala241.

Belongs to the Nudix hydrolase family. NudC subfamily. In terms of assembly, homodimer. Mg(2+) is required as a cofactor. The cofactor is Mn(2+). Requires Zn(2+) as cofactor.

The catalysed reaction is a 5'-end NAD(+)-phospho-ribonucleoside in mRNA + H2O = a 5'-end phospho-adenosine-phospho-ribonucleoside in mRNA + beta-nicotinamide D-ribonucleotide + 2 H(+). It carries out the reaction NAD(+) + H2O = beta-nicotinamide D-ribonucleotide + AMP + 2 H(+). It catalyses the reaction NADH + H2O = reduced beta-nicotinamide D-ribonucleotide + AMP + 2 H(+). MRNA decapping enzyme that specifically removes the nicotinamide adenine dinucleotide (NAD) cap from a subset of mRNAs by hydrolyzing the diphosphate linkage to produce nicotinamide mononucleotide (NMN) and 5' monophosphate mRNA. The NAD-cap is present at the 5'-end of some mRNAs and stabilizes RNA against 5'-processing. Has preference for mRNAs with a 5'-end purine. Catalyzes the hydrolysis of a broad range of dinucleotide pyrophosphates. This Escherichia coli O45:K1 (strain S88 / ExPEC) protein is NAD-capped RNA hydrolase NudC.